Here is a 334-residue protein sequence, read N- to C-terminus: Formamidase (334 aa).

Residues 14 to 260 enclose the CN hydrolase domain; that stretch reads FLVAAIQFPV…WEIVTGEIYP (247 aa). Glutamate 60 (proton acceptor) is an active-site residue. Lysine 133 functions as the Proton donor in the catalytic mechanism. The active-site Nucleophile is the cysteine 166.

The protein belongs to the carbon-nitrogen hydrolase superfamily. Aliphatic amidase family.

It carries out the reaction formamide + H2O = formate + NH4(+). Is an aliphatic amidase with a restricted substrate specificity, as it only hydrolyzes formamide. The polypeptide is Formamidase (Helicobacter pylori (strain Shi470)).